The chain runs to 297 residues: MSAKETIEKLKKARIITALVTPFKENGQINFEAFPKLVEDLLASHTEGLILAGTTAESPTLTHDEELEIFASINQLVDGRVPLIAGIGTNDTRDSVEFIKEVAKLGYIDAGLAVTPYYNKPSQEGIYQHFKAIASASDLPIILYNIPGRVVTEILPDTILRLAQLENVIAVKECTSTDNLAYLIENVPEGFLVYTGEDGLAFHAKTLGGQGVISVASHILGQEFFEMFAEIDHGSIQEAAAIQRKILPKINALFSVTSPAPIKTVLNNKGYAVGGLRLPLVACTDQEAKIIIEQIEN.

Thr55 is a pyruvate binding site. Tyr144 acts as the Proton donor/acceptor in catalysis. Lys172 functions as the Schiff-base intermediate with substrate in the catalytic mechanism. Ile213 lines the pyruvate pocket.

The protein belongs to the DapA family. In terms of assembly, homotetramer; dimer of dimers.

It localises to the cytoplasm. The catalysed reaction is L-aspartate 4-semialdehyde + pyruvate = (2S,4S)-4-hydroxy-2,3,4,5-tetrahydrodipicolinate + H2O + H(+). The protein operates within amino-acid biosynthesis; L-lysine biosynthesis via DAP pathway; (S)-tetrahydrodipicolinate from L-aspartate: step 3/4. Functionally, catalyzes the condensation of (S)-aspartate-beta-semialdehyde [(S)-ASA] and pyruvate to 4-hydroxy-tetrahydrodipicolinate (HTPA). This Lactococcus lactis subsp. cremoris (strain SK11) protein is 4-hydroxy-tetrahydrodipicolinate synthase.